The primary structure comprises 265 residues: Capsule polysaccharide export inner-membrane protein BexB (265 aa).

6 helical membrane-spanning segments follow: residues 37–57 (IGFL…VMMW), 64–84 (KFST…AMMW), 121–141 (VAGA…IGWI), 148–168 (FYML…GLII), 178–198 (FGKI…AFFF), and 235–255 (ESIG…LVMV). An ABC transmembrane type-2 domain is found at 37-258 (IGFLWLFVEP…LMGLVMVKNF (222 aa)).

The protein belongs to the ABC-2 integral membrane protein family.

It is found in the cell inner membrane. Its function is as follows. May form an ATP-driven capsule polysaccharide export apparatus, in association with the BexA, BexC and BexD proteins. The polypeptide is Capsule polysaccharide export inner-membrane protein BexB (bexB) (Haemophilus influenzae).